The primary structure comprises 234 residues: Ribonuclease Trv (234 aa).

Disulfide bonds link C5/C24, C13/C59, C23/C125, C67/C117, and C189/C224. Residue N15 is glycosylated (N-linked (GlcNAc...) asparagine). H52 is an active-site residue. Residue N75 is glycosylated (N-linked (GlcNAc...) asparagine). Active-site residues include E110 and H114.

This sequence belongs to the RNase T2 family.

The enzyme catalyses a ribonucleotidyl-ribonucleotide-RNA + H2O = a 3'-end 3'-phospho-ribonucleotide-RNA + a 5'-end dephospho-ribonucleoside-RNA + H(+). In terms of biological role, this is a base non-specific and adenylic acid preferential ribonuclease. The chain is Ribonuclease Trv from Hypocrea rufa (Trichoderma viride).